We begin with the raw amino-acid sequence, 178 residues long: Large ribosomal subunit protein uL5 (178 aa).

It belongs to the universal ribosomal protein uL5 family. Part of the 50S ribosomal subunit; part of the 5S rRNA/L5/L18/L25 subcomplex. Contacts the 5S rRNA and the P site tRNA. Forms a bridge to the 30S subunit in the 70S ribosome.

Functionally, this is one of the proteins that bind and probably mediate the attachment of the 5S RNA into the large ribosomal subunit, where it forms part of the central protuberance. In the 70S ribosome it contacts protein S13 of the 30S subunit (bridge B1b), connecting the 2 subunits; this bridge is implicated in subunit movement. Contacts the P site tRNA; the 5S rRNA and some of its associated proteins might help stabilize positioning of ribosome-bound tRNAs. This Acinetobacter baylyi (strain ATCC 33305 / BD413 / ADP1) protein is Large ribosomal subunit protein uL5.